A 96-amino-acid polypeptide reads, in one-letter code: Large ribosomal subunit protein bL27 (96 aa).

Positions 12 to 33 (HKGGGSSANGRNSAGRRLGAKA) are disordered. The segment covering 19 to 28 (ANGRNSAGRR) has biased composition (low complexity).

The protein belongs to the bacterial ribosomal protein bL27 family.

The polypeptide is Large ribosomal subunit protein bL27 (Lactobacillus helveticus (strain DPC 4571)).